The sequence spans 555 residues: DNA-directed primase/polymerase protein (555 aa).

A coiled-coil region spans residues 1–22 (MKRKWEATLKQIEERASHYERK). Substrate is bound by residues arginine 76, 114–116 (DLE), and 165–169 (KFSRH). Mn(2+)-binding residues include aspartate 114 and glutamate 116. Positions 210–230 (ETTGHEFTHFSETPSEQGTCF) are disordered. Positions 219–230 (FSETPSEQGTCF) are enriched in polar residues. At serine 255 the chain carries Phosphoserine. Residues 288–291 (RNFR) and lysine 297 contribute to the substrate site. Positions 418, 425, 445, and 450 each coordinate Zn(2+). Positions 418–451 (CENIGRAHRSNNIMILVDLKNEVWYQKCHDPVCK) match the Zinc knuckle motif motif. The tract at residues 480–503 (TDTTADTETKSPHGPSSSVLSKGA) is disordered. The interval 480–555 (TDTTADTETK…DELLIEVLQE (76 aa)) is interaction with RPA1. 2 consecutive short sequence motifs (RPA1-binding motif) follow at residues 509 to 523 (WDNG…EATE) and 543 to 551 (EIPDELLIE).

This sequence belongs to the eukaryotic-type primase small subunit family. As to quaternary structure, interacts with RPA1; leading to recruitment to chromatin and stimulate DNA primase activity. Interacts with SSBP1. Interacts with POLDIP2; leading to enhance DNA polymerase activity. Mn(2+) is required as a cofactor.

It localises to the nucleus. It is found in the mitochondrion matrix. The protein localises to the chromosome. It carries out the reaction ssDNA + n NTP = ssDNA/pppN(pN)n-1 hybrid + (n-1) diphosphate.. The enzyme catalyses DNA(n) + a 2'-deoxyribonucleoside 5'-triphosphate = DNA(n+1) + diphosphate. Functionally, DNA primase and DNA polymerase required to tolerate replication-stalling lesions by bypassing them. Required to facilitate mitochondrial and nuclear replication fork progression by initiating de novo DNA synthesis using dNTPs and acting as an error-prone DNA polymerase able to bypass certain DNA lesions. Shows a high capacity to tolerate DNA damage lesions such as 8oxoG and abasic sites in DNA. Provides different translesion synthesis alternatives when DNA replication is stalled: able to synthesize DNA primers downstream of lesions, such as ultraviolet (UV) lesions, R-loops and G-quadruplexes, to allow DNA replication to continue. Can also realign primers ahead of 'unreadable lesions' such as abasic sites and 6-4 photoproduct (6-4 pyrimidine-pyrimidinone), thereby skipping the lesion. Repriming avoids fork degradation while leading to accumulation of internal ssDNA gaps behind the forks. Also able to incorporate nucleotides opposite DNA lesions such as 8oxoG, like a regular translesion synthesis DNA polymerase. Also required for reinitiating stalled forks after UV damage during nuclear DNA replication. Required for mitochondrial DNA (mtDNA) synthesis and replication, by reinitiating synthesis after UV damage or in the presence of chain-terminating nucleotides. Prevents APOBEC family-mediated DNA mutagenesis by repriming downstream of abasic site to prohibit error-prone translesion synthesis. Has non-overlapping function with POLH. In addition to its role in DNA damage response, also required to maintain efficient nuclear and mitochondrial DNA replication in unperturbed cells. This is DNA-directed primase/polymerase protein from Bos taurus (Bovine).